We begin with the raw amino-acid sequence, 786 residues long: Calcium-independent phospholipase A2-gamma (786 aa).

N-linked (GlcNAc...) asparagine glycosylation is present at N4. 3 disordered regions span residues 158–180, 225–285, and 321–348; these read KKYS…IIDK, KENS…SLPI, and SKSQ…EEKK. Over residues 225–245 the composition is skewed to basic and acidic residues; sequence KENSHFQEKSELEGKKVEEGK. Composition is skewed to polar residues over residues 246–258 and 266–285; these read SSSL…TSQA and SAGT…SLPI. Residues 449–644 enclose the PNPLA domain; it reads LTIDGGGTRG…LLNNPSALAM (196 aa). A GXGXXG motif is present at residues 453–458; sequence GGGTRG. Residues 483 to 503 form a helical membrane-spanning segment; that stretch reads ICGVSTGAILAFMLGLFHLPL. The short motif at 485 to 489 is the GXSXG element; that stretch reads GVSTG. S487 serves as the catalytic Nucleophile. D631 functions as the Proton acceptor in the catalytic mechanism. A DGA/G motif is present at residues 631 to 633; that stretch reads DGG. N6-succinyllysine is present on K740.

As to expression, expressed in kidney, heart and brain.

It localises to the endoplasmic reticulum membrane. It is found in the mitochondrion membrane. The protein localises to the peroxisome membrane. The enzyme catalyses a 1,2-diacyl-sn-glycero-3-phosphocholine + H2O = a 1-acyl-sn-glycero-3-phosphocholine + a fatty acid + H(+). The catalysed reaction is a 1,2-diacyl-sn-glycero-3-phosphocholine + H2O = a 2-acyl-sn-glycero-3-phosphocholine + a fatty acid + H(+). It carries out the reaction a 1,2-diacyl-sn-glycero-3-phosphoethanolamine + H2O = a 1-acyl-sn-glycero-3-phosphoethanolamine + a fatty acid + H(+). It catalyses the reaction a 1-O-(1Z-alkenyl)-2-acyl-sn-glycero-3-phosphocholine + H2O = a 1-O-(1Z-alkenyl)-sn-glycero-3-phosphocholine + a fatty acid + H(+). The enzyme catalyses a 1-acyl-sn-glycero-3-phosphocholine + H2O = sn-glycerol 3-phosphocholine + a fatty acid + H(+). The catalysed reaction is 1-acyl-2-(9Z,12Z)-octadecadienoyl-sn-glycero-3-phosphocholine + H2O = a 1-acyl-sn-glycero-3-phosphocholine + (9Z,12Z)-octadecadienoate + H(+). It carries out the reaction 1-acyl-2-(5Z,8Z,11Z,14Z-eicosatetraenoyl)-sn-glycero-3-phosphocholine + H2O = a 1-acyl-sn-glycero-3-phosphocholine + (5Z,8Z,11Z,14Z)-eicosatetraenoate + H(+). It catalyses the reaction 1-hexadecanoyl-2-(5Z,8Z,11Z,14Z-eicosatetraenoyl)-sn-glycero-3-phosphocholine + H2O = 1-hexadecanoyl-sn-glycero-3-phosphocholine + (5Z,8Z,11Z,14Z)-eicosatetraenoate + H(+). The enzyme catalyses 1-octadecanoyl-2-(9Z-octadecenoyl)-sn-glycero-3-phosphocholine + H2O = 1-octadecanoyl-sn-glycero-3-phosphocholine + (9Z)-octadecenoate + H(+). The catalysed reaction is 1-hexadecanoyl-2-(9Z-octadecenoyl)-sn-glycero-3-phosphocholine + H2O = 1-hexadecanoyl-sn-glycero-3-phosphocholine + (9Z)-octadecenoate + H(+). It carries out the reaction 1-hexadecanoyl-2-(9Z,12Z-octadecadienoyl)-sn-glycero-3-phosphocholine + H2O = (9Z,12Z)-octadecadienoate + 1-hexadecanoyl-sn-glycero-3-phosphocholine + H(+). It catalyses the reaction 1-acyl-2-(9Z,12Z)-octadecadienoyl-sn-glycero-3-phosphoethanolamine + H2O = a 1-acyl-sn-glycero-3-phosphoethanolamine + (9Z,12Z)-octadecadienoate + H(+). The enzyme catalyses 1-acyl-2-(5Z,8Z,11Z,14Z)-eicosatetraenoyl-sn-glycero-3-phosphoethanolamine + H2O = a 1-acyl-sn-glycero-3-phosphoethanolamine + (5Z,8Z,11Z,14Z)-eicosatetraenoate + H(+). The catalysed reaction is 1-hexadecanoyl-2-(5Z,8Z,11Z,14Z-eicosatetraenoyl)-sn-glycero-3-phosphoethanolamine + H2O = 1-hexadecanoyl-sn-glycero-3-phosphoethanolamine + (5Z,8Z,11Z,14Z)-eicosatetraenoate + H(+). It carries out the reaction 1-hexadecanoyl-2-(5Z,8Z,11Z,14Z-eicosatetraenoyl)-sn-glycero-3-phosphocholine + H2O = 2-(5Z,8Z,11Z,14Z)-eicosatetraenoyl-sn-glycero-3-phosphocholine + hexadecanoate + H(+). It catalyses the reaction 1-octadecanoyl-2-(9Z-octadecenoyl)-sn-glycero-3-phosphocholine + H2O = 2-(9Z-octadecenoyl)-sn-glycero-3-phosphocholine + octadecanoate + H(+). The enzyme catalyses 1-hexadecanoyl-2-(4Z,7Z,10Z,13Z,16Z,19Z-docosahexaenoyl)-sn-glycero-3-phosphocholine + H2O = 2-(4Z,7Z,10Z,13Z,16Z,19Z-docosahexaenoyl)-sn-glycero-3-phosphocholine + hexadecanoate + H(+). The catalysed reaction is 1-O-(1Z)-hexadecenyl-2 (5Z,8Z,11Z,14Z)-eicosatetraenoyl-sn-glycero-3-phosphocholine + H2O = 1-(1Z-hexadecenyl)-sn-glycero-3-phosphocholine + (5Z,8Z,11Z,14Z)-eicosatetraenoate + H(+). It carries out the reaction 1-O-(1Z-hexadecenyl)-2-(9Z-octadecenoyl)-sn-glycero-3-phosphocholine + H2O = 1-(1Z-hexadecenyl)-sn-glycero-3-phosphocholine + (9Z)-octadecenoate + H(+). It catalyses the reaction 1-hexadecanoyl-sn-glycero-3-phosphocholine + H2O = sn-glycerol 3-phosphocholine + hexadecanoate + H(+). The enzyme catalyses 1',3'-bis-[1,2-di-(9Z,12Z-octadecadienoyl)-sn-glycero-3-phospho]-glycerol + H2O = 1'-[1,2-di-(9Z,12Z-octadecadienoyl)-sn-glycero-3-phospho]-3'-[1-(9Z,12Z-octadecadienoyl)-sn-glycero-3-phospho]-glycerol + (9Z,12Z)-octadecadienoate + H(+). The catalysed reaction is 1'-[1-acyl-2-(9-hydroxy-(10E,12Z)-octadecadienoyl)-sn-glycero-3-phospho]-3'-[1,2-diacyl-sn-glycero-3-phospho]-glycerol + H2O = 9-hydroxy-(10E,12Z)-octadecadienoate + 1'-[1,2-diacyl-sn-glycero-3-phospho],3'-[1-acyl-sn-glycero-3-phospho]-glycerol + H(+). Its pathway is phospholipid metabolism. With respect to regulation, calcium-independent phospholipase. Its function is as follows. Calcium-independent and membrane-bound phospholipase, that catalyzes the esterolytic cleavage of fatty acids from glycerophospholipids to yield free fatty acids and lysophospholipids, hence regulating membrane physical properties and the release of lipid second messengers and growth factors. Hydrolyzes phosphatidylethanolamine, phosphatidylcholine and probably phosphatidylinositol with a possible preference for the former. Has also a broad substrate specificity in terms of fatty acid moieties, hydrolyzing saturated and mono-unsaturated fatty acids at nearly equal rates from either the sn-1 or sn-2 position in diacyl phosphatidylcholine. However, has a weak activity toward polyunsaturated fatty acids at the sn-2 position, and thereby favors the production of 2-arachidonoyl lysophosphatidylcholine, a key branch point metabolite in eicosanoid signaling. On the other hand, can produce arachidonic acid from the sn-1 position of diacyl phospholipid and from the sn-2 position of arachidonate-containing plasmalogen substrates. Therefore, plays an important role in the mobilization of arachidonic acid in response to cellular stimuli and the generation of lipid second messengers. Can also hydrolyze lysophosphatidylcholine. In the mitochondrial compartment, catalyzes the hydrolysis and release of oxidized aliphatic chains from cardiolipin and integrates mitochondrial bioenergetics and signaling. It is essential for maintaining efficient bioenergetic mitochondrial function through tailoring mitochondrial membrane lipid metabolism and composition. In Oryctolagus cuniculus (Rabbit), this protein is Calcium-independent phospholipase A2-gamma.